The chain runs to 209 residues: Kynurenine formamidase (209 aa).

W20 is a substrate binding site. Zn(2+) is bound by residues H50, H54, and D56. H60 functions as the Proton donor/acceptor in the catalytic mechanism. The Zn(2+) site is built by H161 and E173.

The protein belongs to the Cyclase 1 superfamily. KynB family. As to quaternary structure, homodimer. The cofactor is Zn(2+).

It carries out the reaction N-formyl-L-kynurenine + H2O = L-kynurenine + formate + H(+). Its pathway is amino-acid degradation; L-tryptophan degradation via kynurenine pathway; L-kynurenine from L-tryptophan: step 2/2. Catalyzes the hydrolysis of N-formyl-L-kynurenine to L-kynurenine, the second step in the kynurenine pathway of tryptophan degradation. In Bacillus cereus (strain ZK / E33L), this protein is Kynurenine formamidase.